The primary structure comprises 66 residues: Large ribosomal subunit protein uL29 (66 aa).

Belongs to the universal ribosomal protein uL29 family.

This chain is Large ribosomal subunit protein uL29, found in Rhizobium rhizogenes (strain K84 / ATCC BAA-868) (Agrobacterium radiobacter).